Consider the following 98-residue polypeptide: NADH-ubiquinone oxidoreductase chain 4L (98 aa).

The next 3 helical transmembrane spans lie at 1–21 (MSLVHINIFLAFTVSLVGLLM), 25–45 (HLMSSLLCLEGMMLSLFVMAT), and 59–81 (MPIILLVFAACERALGLSLLVMV).

It belongs to the complex I subunit 4L family. Core subunit of respiratory chain NADH dehydrogenase (Complex I) which is composed of 45 different subunits.

Its subcellular location is the mitochondrion inner membrane. It catalyses the reaction a ubiquinone + NADH + 5 H(+)(in) = a ubiquinol + NAD(+) + 4 H(+)(out). Its function is as follows. Core subunit of the mitochondrial membrane respiratory chain NADH dehydrogenase (Complex I) which catalyzes electron transfer from NADH through the respiratory chain, using ubiquinone as an electron acceptor. Part of the enzyme membrane arm which is embedded in the lipid bilayer and involved in proton translocation. This Equus caballus (Horse) protein is NADH-ubiquinone oxidoreductase chain 4L (MT-ND4L).